A 199-amino-acid polypeptide reads, in one-letter code: Putative inactive ribonuclease 11 (199 aa).

Residues 1–16 (METFPLLLLSLGLVLA) form the signal peptide. N-linked (GlcNAc...) asparagine glycosylation occurs at asparagine 61. Histidine 82 acts as the Proton acceptor in catalysis. N-linked (GlcNAc...) asparagine glycans are attached at residues asparagine 89 and asparagine 111. 2 cysteine pairs are disulfide-bonded: cysteine 98–cysteine 158 and cysteine 114–cysteine 169. A substrate-binding site is contributed by 115–119 (KWSNN).

This sequence belongs to the pancreatic ribonuclease family.

It is found in the secreted. This is Putative inactive ribonuclease 11 (RNASE11) from Homo sapiens (Human).